Here is a 308-residue protein sequence, read N- to C-terminus: Mitochondrial brown fat uncoupling protein 1 (308 aa).

The Mitochondrial intermembrane portion of the chain corresponds to 1–10 (MVASAEADVP). A helical transmembrane segment spans residues 11–33 (PPTMLVKIASAGLSACLADIITF). 3 Solcar repeats span residues 11–103 (PPTM…VQEY), 112–202 (ATLG…LKEA), and 211–296 (DDIP…LKKE). Residues 34–74 (PLDTAKVRLQVQGERPNAPGVKYKGVLGTIATVAKTEGPLK) are Mitochondrial matrix-facing. Residue Lys-57 coordinates fatty acid 16:0. The helical transmembrane segment at 75–97 (LYGGLPAGIQRQISFASLRIGLY) threads the bilayer. At 98–117 (DTVQEYFNAHRKTPATLGNK) the chain is on the mitochondrial intermembrane side. A helical transmembrane segment spans residues 118 to 134 (ISAGLMTGCVTVFIGQP). Residues 135–179 (TEVAKVRMQAQSSLHWLKPRYSGTYNAYYVIVKTEGFLGLWKGTS) lie on the Mitochondrial matrix side of the membrane. The helical transmembrane segment at 180–196 (LNLTRNVIINCTELVVY) threads the bilayer. Residues 197 to 213 (DVLKEALVKNNVLADDI) lie on the Mitochondrial intermembrane side of the membrane. The helical transmembrane segment at 214-233 (PCHLLAALTAGFCTTALASP) threads the bilayer. Residues 234-267 (VDVVKTRFINSPPGYYPHVHNCALNMLQKEGLRA) lie on the Mitochondrial matrix side of the membrane. At Cys-255 the chain carries Cysteine sulfenic acid (-SOH). Residues 268 to 290 (FFKGFVPSFLRLGSWTVIMHVTF) form a helical membrane-spanning segment. Fatty acid 16:0 is bound at residue Lys-270. Topologically, residues 291–308 (EQLKKELMKSRQTVDCAT) are mitochondrial intermembrane.

The protein belongs to the mitochondrial carrier (TC 2.A.29) family. Most probably functions as a monomer. Binds one purine nucleotide per monomer. However, has also been suggested to function as a homodimer or a homotetramer. Tightly associates with cardiolipin in the mitochondrion inner membrane; may stabilize and regulate its activity. May undergo sulfenylation upon cold exposure. May increase the sensitivity of UCP1 thermogenic function to the activation by noradrenaline probably through structural effects. In terms of processing, may undergo ubiquitin-mediated proteasomal degradation. Brown adipose tissue.

Its subcellular location is the mitochondrion inner membrane. It catalyses the reaction H(+)(in) = H(+)(out). Has no constitutive proton transporter activity and has to be activated by long-chain fatty acids/LCFAs. Inhibited by purine nucleotides. Both purine nucleotides and LCFAs bind the cytosolic side of the transporter and directly compete to activate or inhibit it. Activated by noradrenaline and reactive oxygen species. Despite lacking canonical translational encoding for selenocysteine, a small pool of the protein has been observed to selectively incorporate selenocysteine at 'Cys-255'. Selenocysteine-modified protein is highly sensitive to redox modification and may constitute a pool of protein highly sensitive to activation by elevated levels of reactive oxygen species (ROS). Its function is as follows. Mitochondrial protein responsible for thermogenic respiration, a specialized capacity of brown adipose tissue and beige fat that participates in non-shivering adaptive thermogenesis to temperature and diet variations and more generally to the regulation of energy balance. Functions as a long-chain fatty acid/LCFA and proton symporter, simultaneously transporting one LCFA and one proton through the inner mitochondrial membrane. However, LCFAs remaining associated with the transporter via their hydrophobic tails, it results in an apparent transport of protons activated by LCFAs. Thereby, dissipates the mitochondrial proton gradient and converts the energy of substrate oxydation into heat instead of ATP. Regulates the production of reactive oxygen species/ROS by mitochondria. This is Mitochondrial brown fat uncoupling protein 1 from Suncus murinus (Asian house shrew).